The sequence spans 217 residues: MHHIVQFLQTNGGELLYKTYEHITISLIAVILGVLVAVPLGVVLTRMKKGAGTIIGIVNIIQTLPSLAILAFFIPLLGVGKVPAIVALFFYSVLPILRNTYTGIRGVNKNLLESGKGIGMTPAEQVRLVELPLAAPVIMAGIRTSTIYLIGWATLASFIGGGGLGDYIFIGLNLYQPEYIIGGAVPVTILAIVIDYVLAVAERKLTPAGMQRLKELS.

One can recognise an ABC transmembrane type-1 domain in the interval 19-198; the sequence is TYEHITISLI…ILAIVIDYVL (180 aa). 6 consecutive transmembrane segments (helical) span residues 23–43, 52–74, 84–101, 128–148, 150–170, and 180–200; these read ITIS…LGVV, GTII…AFFI, AIVA…RNTY, LVEL…STIY, IGWA…YIFI, and IIGG…VLAV.

The protein belongs to the binding-protein-dependent transport system permease family. CysTW subfamily.

It localises to the cell membrane. Functionally, involved in a high affinity multicomponent binding-protein-dependent transport system for choline; probably responsible for the translocation of the substrate across the membrane. This is Choline transport system permease protein OpuBB (opuBB) from Bacillus subtilis (strain 168).